The sequence spans 453 residues: Glutamyl-tRNA(Gln) amidotransferase subunit A (453 aa).

Residues Lys-56 and Ser-131 each act as charge relay system in the active site. The active-site Acyl-ester intermediate is Ser-155.

It belongs to the amidase family. GatA subfamily. Heterotrimer of A, B and C subunits.

The catalysed reaction is L-glutamyl-tRNA(Gln) + L-glutamine + ATP + H2O = L-glutaminyl-tRNA(Gln) + L-glutamate + ADP + phosphate + H(+). In terms of biological role, allows the formation of correctly charged Gln-tRNA(Gln) through the transamidation of misacylated Glu-tRNA(Gln) in organisms which lack glutaminyl-tRNA synthetase. The reaction takes place in the presence of glutamine and ATP through an activated gamma-phospho-Glu-tRNA(Gln). The sequence is that of Glutamyl-tRNA(Gln) amidotransferase subunit A from Campylobacter fetus subsp. fetus (strain 82-40).